A 265-amino-acid polypeptide reads, in one-letter code: Hydroxyethylthiazole kinase (265 aa).

Residue Met-50 coordinates substrate. Residues Arg-125 and Thr-171 each contribute to the ATP site. A substrate-binding site is contributed by Gly-198.

The protein belongs to the Thz kinase family. Requires Mg(2+) as cofactor.

The enzyme catalyses 5-(2-hydroxyethyl)-4-methylthiazole + ATP = 4-methyl-5-(2-phosphooxyethyl)-thiazole + ADP + H(+). The protein operates within cofactor biosynthesis; thiamine diphosphate biosynthesis; 4-methyl-5-(2-phosphoethyl)-thiazole from 5-(2-hydroxyethyl)-4-methylthiazole: step 1/1. Its function is as follows. Catalyzes the phosphorylation of the hydroxyl group of 4-methyl-5-beta-hydroxyethylthiazole (THZ). This Salmonella paratyphi C (strain RKS4594) protein is Hydroxyethylthiazole kinase.